We begin with the raw amino-acid sequence, 343 residues long: Vancomycin/teicoplanin A-type resistance protein VanA (343 aa).

Residues K133, 169–171 (FVK), 177–178 (SS), 207–214 (EQAVSGCE), and F241 each bind ATP. In terms of domain architecture, ATP-grasp spans 137-338 (YIVAKNAGIA…LPELIDRLIV (202 aa)). A substrate-binding site is contributed by H244. ATP is bound at residue 304–305 (NE). E305 and N307 together coordinate Mg(2+).

The protein belongs to the D-alanine--D-alanine ligase family. It depends on Mg(2+) as a cofactor. Mn(2+) is required as a cofactor.

It is found in the cell membrane. It carries out the reaction (R)-lactate + D-alanine + ATP = D-alanyl-(R)-lactate + ADP + phosphate. Functionally, required for high-level resistance to glycopeptide antibiotics. D-Ala--D-Ala ligase of altered specificity which catalyzes ester bond formation between D-Ala and various D-hydroxy acids; produces a peptidoglycan which does not terminate in D-alanine but in D-lactate, thus preventing vancomycin or teicoplanin binding. The sequence is that of Vancomycin/teicoplanin A-type resistance protein VanA (vanA) from Enterococcus faecium (Streptococcus faecium).